The sequence spans 400 residues: Betaine--homocysteine S-methyltransferase 1 (400 aa).

The Hcy-binding domain maps to 8-309 (RGVLERLNAG…YHIRAVAEEL (302 aa)). Zn(2+) is bound by residues cysteine 212, cysteine 294, and cysteine 295.

As to quaternary structure, homotetramer. Zn(2+) serves as cofactor.

The protein localises to the cytoplasm. It carries out the reaction L-homocysteine + glycine betaine = N,N-dimethylglycine + L-methionine. It participates in amine and polyamine degradation; betaine degradation; sarcosine from betaine: step 1/2. The protein operates within amino-acid biosynthesis; L-methionine biosynthesis via de novo pathway; L-methionine from L-homocysteine (BhmT route): step 1/1. Its function is as follows. Involved in the regulation of homocysteine metabolism. Converts betaine and homocysteine to dimethylglycine and methionine, respectively. This reaction is also required for the irreversible oxidation of choline. The sequence is that of Betaine--homocysteine S-methyltransferase 1 (bhmt) from Danio rerio (Zebrafish).